The sequence spans 150 residues: Phosphopantetheine adenylyltransferase (150 aa).

Threonine 9 is a binding site for substrate. ATP contacts are provided by residues 9–10 (TF) and histidine 17. Substrate contacts are provided by lysine 41, threonine 73, and arginine 87. ATP is bound by residues 88–90 (GIR), glutamate 98, and 122–128 (LTCVSST).

This sequence belongs to the bacterial CoaD family. As to quaternary structure, homohexamer. Requires Mg(2+) as cofactor.

It localises to the cytoplasm. It carries out the reaction (R)-4'-phosphopantetheine + ATP + H(+) = 3'-dephospho-CoA + diphosphate. It participates in cofactor biosynthesis; coenzyme A biosynthesis; CoA from (R)-pantothenate: step 4/5. Functionally, reversibly transfers an adenylyl group from ATP to 4'-phosphopantetheine, yielding dephospho-CoA (dPCoA) and pyrophosphate. The polypeptide is Phosphopantetheine adenylyltransferase (Bacteroides fragilis (strain ATCC 25285 / DSM 2151 / CCUG 4856 / JCM 11019 / LMG 10263 / NCTC 9343 / Onslow / VPI 2553 / EN-2)).